Here is a 125-residue protein sequence, read N- to C-terminus: Small ribosomal subunit protein uS12 (125 aa).

3-methylthioaspartic acid is present on Asp89.

Belongs to the universal ribosomal protein uS12 family. Part of the 30S ribosomal subunit. Contacts proteins S8 and S17. May interact with IF1 in the 30S initiation complex.

In terms of biological role, with S4 and S5 plays an important role in translational accuracy. Its function is as follows. Interacts with and stabilizes bases of the 16S rRNA that are involved in tRNA selection in the A site and with the mRNA backbone. Located at the interface of the 30S and 50S subunits, it traverses the body of the 30S subunit contacting proteins on the other side and probably holding the rRNA structure together. The combined cluster of proteins S8, S12 and S17 appears to hold together the shoulder and platform of the 30S subunit. In Clostridium botulinum (strain Alaska E43 / Type E3), this protein is Small ribosomal subunit protein uS12.